Consider the following 171-residue polypeptide: Peptide deformylase (171 aa).

Cys92 and His134 together coordinate Fe cation. Glu135 is a catalytic residue. His138 is a binding site for Fe cation.

This sequence belongs to the polypeptide deformylase family. Fe(2+) is required as a cofactor.

It carries out the reaction N-terminal N-formyl-L-methionyl-[peptide] + H2O = N-terminal L-methionyl-[peptide] + formate. Its function is as follows. Removes the formyl group from the N-terminal Met of newly synthesized proteins. Requires at least a dipeptide for an efficient rate of reaction. N-terminal L-methionine is a prerequisite for activity but the enzyme has broad specificity at other positions. This is Peptide deformylase from Polynucleobacter necessarius subsp. necessarius (strain STIR1).